The primary structure comprises 278 residues: Orotidine 5'-phosphate decarboxylase (278 aa).

Substrate is bound by residues D40, 65–67 (KTH), 96–105 (DRKFIDIGNT), Y230, and R248. The Proton donor role is filled by K98.

It belongs to the OMP decarboxylase family.

It carries out the reaction orotidine 5'-phosphate + H(+) = UMP + CO2. The protein operates within pyrimidine metabolism; UMP biosynthesis via de novo pathway; UMP from orotate: step 2/2. The chain is Orotidine 5'-phosphate decarboxylase (pyrG) from Penicillium chrysogenum (Penicillium notatum).